We begin with the raw amino-acid sequence, 156 residues long: Arginine repressor (156 aa).

Belongs to the ArgR family.

The protein localises to the cytoplasm. It participates in amino-acid biosynthesis; L-arginine biosynthesis [regulation]. Its function is as follows. Regulates arginine biosynthesis genes. The sequence is that of Arginine repressor from Shewanella piezotolerans (strain WP3 / JCM 13877).